We begin with the raw amino-acid sequence, 116 residues long: Large ribosomal subunit protein bL17 (116 aa).

Belongs to the bacterial ribosomal protein bL17 family. Part of the 50S ribosomal subunit. Contacts protein L32.

This Wolinella succinogenes (strain ATCC 29543 / DSM 1740 / CCUG 13145 / JCM 31913 / LMG 7466 / NCTC 11488 / FDC 602W) (Vibrio succinogenes) protein is Large ribosomal subunit protein bL17.